The sequence spans 112 residues: Hydrogenase maturation factor HypA (112 aa).

His-2 contributes to the Ni(2+) binding site. Residues Cys-73, Cys-76, Cys-88, and Cys-91 each contribute to the Zn(2+) site.

Belongs to the HypA/HybF family.

Functionally, involved in the maturation of [NiFe] hydrogenases. Required for nickel insertion into the metal center of the hydrogenase. This Synechococcus elongatus (strain ATCC 33912 / PCC 7942 / FACHB-805) (Anacystis nidulans R2) protein is Hydrogenase maturation factor HypA.